Consider the following 357-residue polypeptide: Glucose-6-phosphatase catalytic subunit 1 (357 aa).

Topologically, residues 1–28 (MEKGMNVLHDFGIQSTHYLQVNYQDSQD) are lumenal. The helical transmembrane segment at 29–49 (WFILVSVIADLRNAFYVLFPI) threads the bilayer. Residues 50–60 (WFHLREAVGIK) are Cytoplasmic-facing. The helical transmembrane segment at 61–81 (LLWVAVIGDWLNLVFKWILFG) threads the bilayer. At 82 to 117 (QRPYWWVMDTDYYSNASVPLIKQFPVTCETGPGSPS) the chain is on the lumenal side. Arg-83 contributes to the substrate binding site. Residue Asn-96 is glycosylated (N-linked (GlcNAc...) asparagine). The helical transmembrane segment at 118–138 (GHAMGTAGVYYVMVTSTLSMF) threads the bilayer. His-119 functions as the Proton donor in the catalytic mechanism. At 139–147 (RGKKKPTYR) the chain is on the cytoplasmic side. Residues 148–168 (FRCLNVILWLGFWAVQLNVCL) form a helical membrane-spanning segment. The Lumenal portion of the chain corresponds to 169–170 (SR). Arg-170 is a binding site for substrate. Residues 171 to 191 (IYLAAHFPHQVVAGVLSGIAV) form a helical membrane-spanning segment. Catalysis depends on His-176, which acts as the Nucleophile. At 192–209 (AETFRHIQSIYNASLKKY) the chain is on the cytoplasmic side. Residues 210–230 (FFITFFLLSFAIGFYLLLKGL) form a helical membrane-spanning segment. The Lumenal portion of the chain corresponds to 231–254 (GVDLLWTLEKARRWCERPEWVHID). The helical transmembrane segment at 255 to 275 (TTPFASLLKNVGTLFGLGLAL) threads the bilayer. The Cytoplasmic portion of the chain corresponds to 276-291 (NSSMYRESCKGTLSKW). The helical transmembrane segment at 292–312 (FPFRLSCIVVSLILLHLFDSL) threads the bilayer. Over 313 to 320 (KPPSQIEL) the chain is Lumenal. The helical transmembrane segment at 321-341 (IFYVLSFCKSAAVPLASVSLI) threads the bilayer. Topologically, residues 342–357 (PYCLARVLGQPDKKSL) are cytoplasmic. Positions 354–357 (KKSL) match the Prevents secretion from ER motif.

Belongs to the glucose-6-phosphatase family.

It localises to the endoplasmic reticulum membrane. The enzyme catalyses D-glucose 6-phosphate + H2O = D-glucose + phosphate. Its pathway is carbohydrate biosynthesis; gluconeogenesis. Hydrolyzes glucose-6-phosphate to glucose in the endoplasmic reticulum. Forms with the glucose-6-phosphate transporter (SLC37A4/G6PT) the complex responsible for glucose production in the terminal step of glycogenolysis and gluconeogenesis. Hence, it is the key enzyme in homeostatic regulation of blood glucose levels. This chain is Glucose-6-phosphatase catalytic subunit 1 (G6PC1), found in Felis catus (Cat).